Here is a 117-residue protein sequence, read N- to C-terminus: Holo-[acyl-carrier-protein] synthase (117 aa).

The Mg(2+) site is built by aspartate 8 and glutamate 58.

It belongs to the P-Pant transferase superfamily. AcpS family. Requires Mg(2+) as cofactor.

Its subcellular location is the cytoplasm. It carries out the reaction apo-[ACP] + CoA = holo-[ACP] + adenosine 3',5'-bisphosphate + H(+). In terms of biological role, transfers the 4'-phosphopantetheine moiety from coenzyme A to a Ser of acyl-carrier-protein. This is Holo-[acyl-carrier-protein] synthase from Staphylococcus epidermidis (strain ATCC 35984 / DSM 28319 / BCRC 17069 / CCUG 31568 / BM 3577 / RP62A).